The chain runs to 490 residues: UDP-glycosyltransferase 73C7 (490 aa).

UDP-alpha-D-glucose is bound by residues S291, 351 to 353 (APQ), 368 to 376 (HCGWNSTLE), and 390 to 393 (FAEQ).

This sequence belongs to the UDP-glycosyltransferase family.

This Arabidopsis thaliana (Mouse-ear cress) protein is UDP-glycosyltransferase 73C7 (UGT73C7).